The sequence spans 793 residues: Probable exo-1,4-beta-xylosidase xlnD (793 aa).

A signal peptide spans 1–20 (MPRVASVAAVLAALLPSALG). N-linked (GlcNAc...) asparagine glycans are attached at residues Asn23, Asn87, and Asn142. The active site involves Asp310. 11 N-linked (GlcNAc...) asparagine glycosylation sites follow: Asn326, Asn385, Asn404, Asn440, Asn477, Asn518, Asn559, Asn614, Asn652, Asn679, and Asn701.

It belongs to the glycosyl hydrolase 3 family.

It localises to the secreted. It carries out the reaction Hydrolysis of (1-&gt;4)-beta-D-xylans, to remove successive D-xylose residues from the non-reducing termini.. It participates in glycan degradation; xylan degradation. Xylan 1,4-beta-xylosidase involved in the hydrolysis of xylan, a major structural heterogeneous polysaccharide found in plant biomass representing the second most abundant polysaccharide in the biosphere, after cellulose. The chain is Probable exo-1,4-beta-xylosidase xlnD (xlnD) from Aspergillus terreus (strain NIH 2624 / FGSC A1156).